A 156-amino-acid polypeptide reads, in one-letter code: Endoribonuclease YbeY (156 aa).

Residues His-122, His-126, and His-132 each coordinate Zn(2+).

It belongs to the endoribonuclease YbeY family. The cofactor is Zn(2+).

The protein localises to the cytoplasm. Its function is as follows. Single strand-specific metallo-endoribonuclease involved in late-stage 70S ribosome quality control and in maturation of the 3' terminus of the 16S rRNA. In Geobacillus thermodenitrificans (strain NG80-2), this protein is Endoribonuclease YbeY.